Reading from the N-terminus, the 104-residue chain is Small ribosomal subunit protein uS10 (104 aa).

This sequence belongs to the universal ribosomal protein uS10 family. Part of the 30S ribosomal subunit.

Its function is as follows. Involved in the binding of tRNA to the ribosomes. This is Small ribosomal subunit protein uS10 from Buchnera aphidicola subsp. Baizongia pistaciae (strain Bp).